A 469-amino-acid polypeptide reads, in one-letter code: Glutamate--tRNA ligase (469 aa).

The 'HIGH' region motif lies at 10-20; the sequence is PSPTGYLHVGG. Positions 99, 101, 126, and 128 each coordinate Zn(2+). The 'KMSKS' region signature appears at 238–242; it reads RLSKR. Lys-241 provides a ligand contact to ATP.

This sequence belongs to the class-I aminoacyl-tRNA synthetase family. Glutamate--tRNA ligase type 1 subfamily. Monomer. Zn(2+) is required as a cofactor.

The protein localises to the cytoplasm. The enzyme catalyses tRNA(Glu) + L-glutamate + ATP = L-glutamyl-tRNA(Glu) + AMP + diphosphate. Functionally, catalyzes the attachment of glutamate to tRNA(Glu) in a two-step reaction: glutamate is first activated by ATP to form Glu-AMP and then transferred to the acceptor end of tRNA(Glu). The chain is Glutamate--tRNA ligase from Pelobacter propionicus (strain DSM 2379 / NBRC 103807 / OttBd1).